Consider the following 296-residue polypeptide: Acetylglutamate kinase (296 aa).

Substrate-binding positions include Gly69–Gly70, Arg91, and Asn193.

This sequence belongs to the acetylglutamate kinase family. ArgB subfamily.

The protein resides in the cytoplasm. The enzyme catalyses N-acetyl-L-glutamate + ATP = N-acetyl-L-glutamyl 5-phosphate + ADP. Its pathway is amino-acid biosynthesis; L-arginine biosynthesis; N(2)-acetyl-L-ornithine from L-glutamate: step 2/4. Functionally, catalyzes the ATP-dependent phosphorylation of N-acetyl-L-glutamate. The protein is Acetylglutamate kinase of Delftia acidovorans (strain DSM 14801 / SPH-1).